The sequence spans 229 residues: Heptaprenylglyceryl phosphate synthase (229 aa).

Lys12 serves as a coordination point for sn-glycerol 1-phosphate. Mg(2+) contacts are provided by Asp14 and Ser40. Sn-glycerol 1-phosphate-binding positions include 159 to 164, Gly189, and 209 to 210; these read YLEYSG and GN.

Belongs to the GGGP/HepGP synthase family. Group I subfamily. In terms of assembly, homodimer. Mg(2+) serves as cofactor.

It carries out the reaction sn-glycerol 1-phosphate + all-trans-heptaprenyl diphosphate = 3-heptaprenyl-sn-glycero-1-phosphate + diphosphate. The protein operates within membrane lipid metabolism; glycerophospholipid metabolism. Functionally, prenyltransferase that catalyzes in vivo the transfer of the heptaprenyl moiety of heptaprenyl pyrophosphate (HepPP; 35 carbon atoms) to the C3 hydroxyl of sn-glycerol-1-phosphate (G1P), producing heptaprenylglyceryl phosphate (HepGP). This reaction is an ether-bond-formation step in the biosynthesis of archaea-type G1P-based membrane lipids found in Bacillales. This is Heptaprenylglyceryl phosphate synthase from Bacillus cereus (strain G9842).